A 253-amino-acid polypeptide reads, in one-letter code: 5'-nucleotidase SurE (253 aa).

4 residues coordinate a divalent metal cation: Asp-8, Asp-9, Ser-39, and Asn-92.

Belongs to the SurE nucleotidase family. Requires a divalent metal cation as cofactor.

It localises to the cytoplasm. It carries out the reaction a ribonucleoside 5'-phosphate + H2O = a ribonucleoside + phosphate. In terms of biological role, nucleotidase that shows phosphatase activity on nucleoside 5'-monophosphates. The protein is 5'-nucleotidase SurE of Burkholderia thailandensis (strain ATCC 700388 / DSM 13276 / CCUG 48851 / CIP 106301 / E264).